We begin with the raw amino-acid sequence, 171 residues long: Lipoprotein signal peptidase (171 aa).

3 helical membrane-spanning segments follow: residues 8 to 28 (SFLW…YIVV), 64 to 84 (WQQY…VYFL), and 96 to 118 (SAYA…NGFV). Active-site residues include Asp-120 and Asp-138. Residues 133 to 153 (VFNIADIAICIGAGLLALDAF) form a helical membrane-spanning segment.

It belongs to the peptidase A8 family.

The protein localises to the cell inner membrane. The enzyme catalyses Release of signal peptides from bacterial membrane prolipoproteins. Hydrolyzes -Xaa-Yaa-Zaa-|-(S,diacylglyceryl)Cys-, in which Xaa is hydrophobic (preferably Leu), and Yaa (Ala or Ser) and Zaa (Gly or Ala) have small, neutral side chains.. The protein operates within protein modification; lipoprotein biosynthesis (signal peptide cleavage). Functionally, this protein specifically catalyzes the removal of signal peptides from prolipoproteins. This is Lipoprotein signal peptidase from Haemophilus influenzae (strain 86-028NP).